The primary structure comprises 119 residues: MVKLAFPRELRLLTPAHFTFVFQQPQRAGTPQITILGRLNSLGHPRIGLTVAKKNVRRAHERNRIKRLTRESFRQRQHELPAMDFVVVAKKGVADLDNRALSEALEKLWRRHCRLARGS.

It belongs to the RnpA family. Consists of a catalytic RNA component (M1 or rnpB) and a protein subunit.

It carries out the reaction Endonucleolytic cleavage of RNA, removing 5'-extranucleotides from tRNA precursor.. RNaseP catalyzes the removal of the 5'-leader sequence from pre-tRNA to produce the mature 5'-terminus. It can also cleave other RNA substrates such as 4.5S RNA. The protein component plays an auxiliary but essential role in vivo by binding to the 5'-leader sequence and broadening the substrate specificity of the ribozyme. In Salmonella arizonae (strain ATCC BAA-731 / CDC346-86 / RSK2980), this protein is Ribonuclease P protein component.